The chain runs to 404 residues: Cysteine desulfurase IscS (404 aa).

Residues 75–76, asparagine 155, glutamine 183, and 203–205 each bind pyridoxal 5'-phosphate; these read AT and SGH. N6-(pyridoxal phosphate)lysine is present on lysine 206. Residue threonine 243 coordinates pyridoxal 5'-phosphate. Cysteine 328 serves as the catalytic Cysteine persulfide intermediate. [2Fe-2S] cluster is bound at residue cysteine 328.

It belongs to the class-V pyridoxal-phosphate-dependent aminotransferase family. NifS/IscS subfamily. Homodimer. Forms a heterotetramer with IscU, interacts with other sulfur acceptors. It depends on pyridoxal 5'-phosphate as a cofactor.

The protein resides in the cytoplasm. The catalysed reaction is (sulfur carrier)-H + L-cysteine = (sulfur carrier)-SH + L-alanine. It functions in the pathway cofactor biosynthesis; iron-sulfur cluster biosynthesis. In terms of biological role, master enzyme that delivers sulfur to a number of partners involved in Fe-S cluster assembly, tRNA modification or cofactor biosynthesis. Catalyzes the removal of elemental sulfur and selenium atoms from cysteine and selenocysteine to produce alanine. Functions as a sulfur delivery protein for Fe-S cluster synthesis onto IscU, an Fe-S scaffold assembly protein, as well as other S acceptor proteins. Also functions as a selenium delivery protein in the pathway for the biosynthesis of selenophosphate. In Escherichia coli (strain K12 / DH10B), this protein is Cysteine desulfurase IscS.